The chain runs to 807 residues: Shutoff protein (807 aa).

Residues 1–88 (MESVEKKDSL…QVGRGDERHG (88 aa)) form a disordered region. Residues 16–29 (FATTASTDAANAPT) are compositionally biased toward polar residues. 2 stretches are compositionally biased toward basic and acidic residues: residues 59–70 (RSVPTEDKKQDQ) and 79–88 (QVGRGDERHG). Residues 280–345 (VMSELIVRRA…AVLVTVELEC (66 aa)) are binding to host EIF4G. The RRM domain maps to 348 to 466 (RFFADPEMQR…DLWTAFNERS (119 aa)). A phosphotyrosine; by host mark is found at Tyr365 and Tyr682. A disordered region spans residues 684–807 (DPQSGEELNP…AGTARSPTQP (124 aa)). Gly residues predominate over residues 726–743 (GRGGILGQSGRGGFGRGG). Residues 744–755 (GGHDGRLGEPRR) show a composition bias toward basic and acidic residues. Basic residues predominate over residues 756-765 (GSFRGRRGVR).

Belongs to the adenoviridae shutoff protein family. In terms of assembly, monomer. Interacts with hexon protein; this interaction allows chaperoning and trimerization of hexon proteins. Interacts (via N-terminus) with host initiation factor EIF4G (via C-terminus). Interacts (via RRM domain) with viral mRNAs that contain the tripartite leader; this interaction allows ribosome shunting and expression of viral late mRNAs. Post-translationally, might be cleaved by the viral protease. Phosphorylated. Tyrosine phosphorylation enhances preferential binding to tripartite leader mRNAs and allows ribosome shunting. In terms of processing, methylated. Asymmetric dimethylation by host PRMT1 of the Arg/Gly-rich region may regulate shutoff protein binding to hexon and promote the capsid assembly in the nucleus.

The protein localises to the host cytoplasm. Functionally, protein that inhibits host translation while promoting late viral translation by ribosome shunting. Blocks host cap-dependent translation by binding to eIF4G, displacing MKNK1 from cap initiation complexes and preventing EIF4E phosphorylation. Binds to the tripartite leader sequence of viral late mRNAs and recruits host eIF4G, PABPC1/poly-A binding protein and 40S ribosomes subunits on viral mRNAs, allowing ribosome shunting and efficient translation of late viral mRNAs even though conventional translation via ribosome scanning from the cap has been shut off in the host cell. During assembly, acts as a chaperone protein that helps hexon proteins assembly into trimers. The protein is Shutoff protein of Homo sapiens (Human).